We begin with the raw amino-acid sequence, 158 residues long: MARMHARKRGKSGSKRPPRTAPPIWLDYTVEDIENLVVKLRKEGYSTAMIGTILRDQYGIPTVKLFRDPDNPNRKLTITRILEKHGLAPEIPEDLMFLIRRAVNLRKHLEQHPKDLHSMRGLQLIESKIRRLVKYYKRKGKLPRDWRYDPEQAKLLVR.

Positions 1–18 (MARMHARKRGKSGSKRPP) are enriched in basic residues. The segment at 1 to 21 (MARMHARKRGKSGSKRPPRTA) is disordered.

It belongs to the universal ribosomal protein uS15 family. As to quaternary structure, part of the 30S ribosomal subunit.

The sequence is that of Small ribosomal subunit protein uS15 from Pyrococcus horikoshii (strain ATCC 700860 / DSM 12428 / JCM 9974 / NBRC 100139 / OT-3).